Reading from the N-terminus, the 228-residue chain is 2,3-bisphosphoglycerate-dependent phosphoglycerate mutase (228 aa).

Residues 8 to 15 (RHGQSVWN), 21 to 22 (TG), Arg-60, 87 to 90 (ERHY), Lys-98, 114 to 115 (RR), and 183 to 184 (GN) contribute to the substrate site. The active-site Tele-phosphohistidine intermediate is the His-9. Glu-87 functions as the Proton donor/acceptor in the catalytic mechanism.

It belongs to the phosphoglycerate mutase family. BPG-dependent PGAM subfamily.

The catalysed reaction is (2R)-2-phosphoglycerate = (2R)-3-phosphoglycerate. Its pathway is carbohydrate degradation; glycolysis; pyruvate from D-glyceraldehyde 3-phosphate: step 3/5. Its function is as follows. Catalyzes the interconversion of 2-phosphoglycerate and 3-phosphoglycerate. The chain is 2,3-bisphosphoglycerate-dependent phosphoglycerate mutase from Staphylococcus saprophyticus subsp. saprophyticus (strain ATCC 15305 / DSM 20229 / NCIMB 8711 / NCTC 7292 / S-41).